The following is a 206-amino-acid chain: 3-demethoxyubiquinol 3-hydroxylase (206 aa).

6 residues coordinate Fe cation: Glu55, Glu85, His88, Glu137, Glu169, and His172.

The protein belongs to the COQ7 family. It depends on Fe cation as a cofactor.

It is found in the cell membrane. It carries out the reaction a 5-methoxy-2-methyl-3-(all-trans-polyprenyl)benzene-1,4-diol + AH2 + O2 = a 3-demethylubiquinol + A + H2O. The protein operates within cofactor biosynthesis; ubiquinone biosynthesis. Catalyzes the hydroxylation of 2-nonaprenyl-3-methyl-6-methoxy-1,4-benzoquinol during ubiquinone biosynthesis. The polypeptide is 3-demethoxyubiquinol 3-hydroxylase (Laribacter hongkongensis (strain HLHK9)).